The chain runs to 352 residues: Carbohydrate sulfotransferase 11 (352 aa).

Topologically, residues 1-16 are cytoplasmic; that stretch reads MKPALLEVMRMNRICR. A helical; Signal-anchor for type II membrane protein transmembrane segment spans residues 17–37; that stretch reads MVLATCFGSFILVIFYFQSML. The Lumenal portion of the chain corresponds to 38–352; sequence HPVMRRNPFG…YSVPNYLKLD (315 aa). Residues 124 to 130 and 186 to 194 contribute to the 3'-phosphoadenylyl sulfate site; these read PKVACTN and REPFERLVS. Residues asparagine 205, asparagine 223, asparagine 321, and asparagine 342 are each glycosylated (N-linked (GlcNAc...) asparagine).

Belongs to the sulfotransferase 2 family. Post-translationally, N-glycosylated; required for activity and stability. As to expression, predominantly expressed in brain and kidney. Also expressed at weaker level in heart, spleen and lung. Expressed in developing chondrocytes.

Its subcellular location is the golgi apparatus membrane. The enzyme catalyses chondroitin beta-D-glucuronate + n 3'-phosphoadenylyl sulfate = chondroitin 4'-sulfate + n adenosine 3',5'-bisphosphate + n H(+). Its function is as follows. Catalyzes the transfer of sulfate to position 4 of the N-acetylgalactosamine (GalNAc) residue of chondroitin. Chondroitin sulfate constitutes the predominant proteoglycan present in cartilage and is distributed on the surfaces of many cells and extracellular matrices. Can also sulfate Gal residues in desulfated dermatan sulfate. Preferentially sulfates in GlcA-&gt;GalNAc unit than in IdoA-&gt;GalNAc unit. Does not form 4, 6-di-O-sulfated GalNAc when chondroitin sulfate C is used as an acceptor. In Mus musculus (Mouse), this protein is Carbohydrate sulfotransferase 11 (Chst11).